Reading from the N-terminus, the 699-residue chain is Polyribonucleotide nucleotidyltransferase (699 aa).

Residues Asp-485 and Asp-491 each coordinate Mg(2+). Residues 552-611 (PRITTIKINPEKIRDVIGKGGAVIRALTEETGTTIELEDDGTVKIASSNGDATREAIRRI) form the KH domain. The S1 motif domain maps to 621–689 (GRIYNGKVIR…RQGRVRLSIK (69 aa)).

This sequence belongs to the polyribonucleotide nucleotidyltransferase family. Component of the RNA degradosome, which is a multiprotein complex involved in RNA processing and mRNA degradation. Mg(2+) is required as a cofactor.

It is found in the cytoplasm. It catalyses the reaction RNA(n+1) + phosphate = RNA(n) + a ribonucleoside 5'-diphosphate. Its function is as follows. Involved in mRNA degradation. Catalyzes the phosphorolysis of single-stranded polyribonucleotides processively in the 3'- to 5'-direction. In Shewanella sp. (strain ANA-3), this protein is Polyribonucleotide nucleotidyltransferase.